Reading from the N-terminus, the 435-residue chain is GPI-anchor transamidase component PIGU (435 aa).

Residues Met-1–Ala-3 lie on the Cytoplasmic side of the membrane. The chain crosses the membrane as a helical span at residues Pro-4–Ser-22. Residues Ser-23 to Asp-78 are Lumenal-facing. A helical transmembrane segment spans residues Tyr-79–Ile-99. Residues Gln-100 to Ile-136 lie on the Cytoplasmic side of the membrane. A run of 4 helical transmembrane segments spans residues Pro-137–Ser-158, Thr-159–Ser-178, Val-179–Leu-194, and Tyr-195–Leu-205. Residues Tyr-206–Phe-222 lie on the Cytoplasmic side of the membrane. Lys-216 contacts a cardiolipin. The chain crosses the membrane as a helical span at residues Trp-223–Ser-244. Residues Phe-245 to Ser-286 lie on the Lumenal side of the membrane. A helical membrane pass occupies residues Leu-287–Ile-306. Residues Lys-307–His-311 lie on the Cytoplasmic side of the membrane. Residue Lys-309 coordinates a cardiolipin. Transmembrane regions (helical) follow at residues Pro-312–Thr-331 and Val-332–Trp-345. At Asn-346–Asn-354 the chain is on the cytoplasmic side. Residues Val-355–Leu-372 form a helical membrane-spanning segment. At Trp-373 to Ser-384 the chain is on the lumenal side. Residues Asn-383 and Asn-385 each contribute to the a 2-acyl-6-[6-phosphoethanolamine-alpha-D-mannosyl-(1-&gt;2)-6-phosphoethanolamine-alpha-D-mannosyl-(1-&gt;6)-2-phosphoethanolamine-alpha-D-mannosyl-(1-&gt;4)-alpha-D-glucosaminyl]-1-(1-radyl,2-acyl-sn-glycero-3-phospho)-1D-myo-inositol site. The helical transmembrane segment at Asn-385 to Phe-406 threads the bilayer. Over Tyr-407–Lys-435 the chain is Cytoplasmic.

This sequence belongs to the PIGU family. Heteropentamer. Part of the GPI-anchor transamidase complex, consisting of PIGK, PIGT, PIGS, PIGU and GAA1.

Its subcellular location is the endoplasmic reticulum membrane. It functions in the pathway glycolipid biosynthesis; glycosylphosphatidylinositol-anchor biosynthesis. Its function is as follows. Component of the glycosylphosphatidylinositol-anchor (GPI-anchor) transamidase (GPI-T) complex that catalyzes the formation of the linkage between a proprotein and a GPI-anchor and participates in GPI anchored protein biosynthesis. Binds the lipid portion of GPI-anchor. May act as an organizer in the transmembrane layer to recruit other subunits, and thus is essential for assembly of the complex. The sequence is that of GPI-anchor transamidase component PIGU from Cricetulus griseus (Chinese hamster).